Consider the following 550-residue polypeptide: Proteasome-associated ATPase (550 aa).

A coiled-coil region spans residues glutamate 9 to glutamine 48. Residue glycine 233–leucine 238 participates in ATP binding. The interval lysine 528–leucine 550 is disordered. The tract at residues tyrosine 549–leucine 550 is docks into pockets in the proteasome alpha-ring.

The protein belongs to the AAA ATPase family. Homohexamer. Assembles into a hexameric ring structure that caps the 20S proteasome core. Strongly interacts with the prokaryotic ubiquitin-like protein Pup through a hydrophobic interface; the interacting region of ARC lies in its N-terminal coiled-coil domain. There is one Pup binding site per ARC hexamer ring. Upon ATP-binding, the C-terminus of ARC interacts with the alpha-rings of the proteasome core, possibly by binding to the intersubunit pockets.

It functions in the pathway protein degradation; proteasomal Pup-dependent pathway. ATPase which is responsible for recognizing, binding, unfolding and translocation of pupylated proteins into the bacterial 20S proteasome core particle. May be essential for opening the gate of the 20S proteasome via an interaction with its C-terminus, thereby allowing substrate entry and access to the site of proteolysis. Thus, the C-termini of the proteasomal ATPase may function like a 'key in a lock' to induce gate opening and therefore regulate proteolysis. The chain is Proteasome-associated ATPase from Jonesia denitrificans (strain ATCC 14870 / DSM 20603 / BCRC 15368 / CIP 55.134 / JCM 11481 / NBRC 15587 / NCTC 10816 / Prevot 55134) (Listeria denitrificans).